The chain runs to 293 residues: MSNHDQLHRYLFANHAVRGELVSVNETYQQVLANHDYPPAVQKLLGEMLVATSLLTATLKFDGDITVQLQGGDGPLTLAVINGNNRQEMRGVARVKGEISDDSTLQEMVGNGYLVITITPAQGERYQGVVALEGETIAACLENYFMQSEQLPTRLFIRTGHVADKAAAGGMLLQVLPAQERNEDEFDHLAQLTATIKAEELFTLPANEVLYRLYHQEEVTLYEPQNVSFRCTCSRQRCADALVTLADDDVTEMLEQDGNIDMHCEYCGNHYLFDAVDIATLKNGNSASSEQIH.

Intrachain disulfides connect Cys231–Cys233 and Cys264–Cys267.

This sequence belongs to the HSP33 family. In terms of processing, under oxidizing conditions two disulfide bonds are formed involving the reactive cysteines. Under reducing conditions zinc is bound to the reactive cysteines and the protein is inactive.

It localises to the cytoplasm. Functionally, redox regulated molecular chaperone. Protects both thermally unfolding and oxidatively damaged proteins from irreversible aggregation. Plays an important role in the bacterial defense system toward oxidative stress. In Yersinia pseudotuberculosis serotype O:1b (strain IP 31758), this protein is 33 kDa chaperonin.